Here is an 84-residue protein sequence, read N- to C-terminus: Protein myomixer (84 aa).

The Cytoplasmic portion of the chain corresponds to 1-4 (MPTP). Residues 5-25 (LLPLLLRLLLSCLLLPAARLA) traverse the membrane as a helical segment. At 26-84 (RQYLLPLLRRLARRLGSQDMREALLGCLLFILSQRHSPDAGEASRVDRLERRERLGPQK) the chain is on the extracellular side. An AxLyCxL motif is present at residues 48–57 (ALLGCLLFIL). Residues 62-84 (SPDAGEASRVDRLERRERLGPQK) are disordered.

Belongs to the MYMX family. As to quaternary structure, interacts with MYMK.

It is found in the cell membrane. Myoblast-specific protein that mediates myoblast fusion, an essential step for the formation of multi-nucleated muscle fibers. Involved in membrane fusion downstream of the lipid mixing step mediated by MYMK. Acts by generating membrane stresses via its extracellular C-terminus, leading to drive fusion pore formation. Acts independently of MYMK. Involved in skeletal muscle regeneration in response to injury by mediating the fusion of satellite cells, a population of muscle stem cells, with injured myofibers. The sequence is that of Protein myomixer from Homo sapiens (Human).